The chain runs to 257 residues: 3-deoxy-manno-octulosonate cytidylyltransferase (257 aa).

The protein belongs to the KdsB family.

It localises to the cytoplasm. The enzyme catalyses 3-deoxy-alpha-D-manno-oct-2-ulosonate + CTP = CMP-3-deoxy-beta-D-manno-octulosonate + diphosphate. Its pathway is nucleotide-sugar biosynthesis; CMP-3-deoxy-D-manno-octulosonate biosynthesis; CMP-3-deoxy-D-manno-octulosonate from 3-deoxy-D-manno-octulosonate and CTP: step 1/1. It functions in the pathway bacterial outer membrane biogenesis; lipopolysaccharide biosynthesis. Functionally, activates KDO (a required 8-carbon sugar) for incorporation into bacterial lipopolysaccharide in Gram-negative bacteria. This Rhodospirillum centenum (strain ATCC 51521 / SW) protein is 3-deoxy-manno-octulosonate cytidylyltransferase.